The following is a 333-amino-acid chain: F420-dependent glucose-6-phosphate dehydrogenase (333 aa).

D37 is a binding site for coenzyme F420-(gamma-Glu)n. H38 acts as the Proton donor in catalysis. Residues T74 and 105–106 (SG) each bind coenzyme F420-(gamma-Glu)n. E107 (proton acceptor) is an active-site residue. Residues N110, 174–175 (GG), and 177–178 (VV) contribute to the coenzyme F420-(gamma-Glu)n site. Residues T192, K195, K256, and R280 each coordinate substrate.

Belongs to the F420-dependent glucose-6-phosphate dehydrogenase family. As to quaternary structure, homodimer.

It catalyses the reaction oxidized coenzyme F420-(gamma-L-Glu)(n) + D-glucose 6-phosphate + H(+) = 6-phospho-D-glucono-1,5-lactone + reduced coenzyme F420-(gamma-L-Glu)(n). In terms of biological role, catalyzes the coenzyme F420-dependent oxidation of glucose 6-phosphate (G6P) to 6-phosphogluconolactone. This Amycolatopsis mediterranei (strain U-32) protein is F420-dependent glucose-6-phosphate dehydrogenase.